Here is a 309-residue protein sequence, read N- to C-terminus: tRNA dimethylallyltransferase (309 aa).

10 to 17 (GPTAVGKT) contacts ATP. Residue 12–17 (TAVGKT) coordinates substrate. The segment at 35 to 38 (DSMQ) is interaction with substrate tRNA.

Belongs to the IPP transferase family. In terms of assembly, monomer. It depends on Mg(2+) as a cofactor.

The catalysed reaction is adenosine(37) in tRNA + dimethylallyl diphosphate = N(6)-dimethylallyladenosine(37) in tRNA + diphosphate. Its function is as follows. Catalyzes the transfer of a dimethylallyl group onto the adenine at position 37 in tRNAs that read codons beginning with uridine, leading to the formation of N6-(dimethylallyl)adenosine (i(6)A). The chain is tRNA dimethylallyltransferase from Clostridium beijerinckii (strain ATCC 51743 / NCIMB 8052) (Clostridium acetobutylicum).